An 87-amino-acid polypeptide reads, in one-letter code: U14-lycotoxin-Ls1b (87 aa).

The signal sequence occupies residues 1–20; the sequence is MNSKVFAVLLLLALSTCVLS. In terms of domain architecture, WAP spans 21–66; that stretch reads EKYCPTPRNTSCKKMNIRNNCCRDSDCTSNAFCCAEPCGNFCHKAS. 5 disulfide bridges follow: Cys-24/Cys-54, Cys-32/Cys-58, Cys-41/Cys-53, Cys-42/Cys-80, and Cys-47/Cys-62.

It belongs to the venom protein 11 family. 01 (wap-1) subfamily. In terms of processing, contains 5 disulfide bonds. As to expression, expressed by the venom gland.

The protein localises to the secreted. Functionally, has antibacterial activity. This chain is U14-lycotoxin-Ls1b, found in Lycosa singoriensis (Wolf spider).